We begin with the raw amino-acid sequence, 178 residues long: MIITIGGLPGTGTTTTSKLLSEKYGLKHVCAGFIFRDMAKEMNMTLQEFSSYAETNTEVDNEIDRRQVEAAQSGDLILEGRLAGWILKKSDIKPDLSIWLKADPMVRCVRISERENENVDLALEKMISREASEKKRYKEIYNIEIDDLSIYDLVIESSKWDANGVFNIIEKAIDNLKA.

Residue 7–15 (GLPGTGTTT) participates in ATP binding.

This sequence belongs to the cytidylate kinase family. Type 2 subfamily.

Its subcellular location is the cytoplasm. It carries out the reaction CMP + ATP = CDP + ADP. It catalyses the reaction dCMP + ATP = dCDP + ADP. The sequence is that of Cytidylate kinase from Methanococcus maripaludis (strain C5 / ATCC BAA-1333).